Reading from the N-terminus, the 157-residue chain is Spore germination protein GerT (157 aa).

The protein resides in the spore coat. Involved in spore germination; probably required at the earliest stage of germination. The sequence is that of Spore germination protein GerT (gerT) from Bacillus subtilis (strain 168).